The sequence spans 475 residues: Phosphoethanolamine N-methyltransferase 1 (475 aa).

The protein belongs to the class I-like SAM-binding methyltransferase superfamily.

It carries out the reaction phosphoethanolamine + S-adenosyl-L-methionine = N-methylethanolamine phosphate + S-adenosyl-L-homocysteine + H(+). Its pathway is phospholipid metabolism; phosphatidylcholine biosynthesis; phosphocholine from phosphoethanolamine. With respect to regulation, feedback inhibition by phosphatidylcholine. In terms of biological role, catalyzes the first step in the synthesis of phosphocholine by converting phosphoethanolamine into phospho-monomethylethanolamine (N-methylethanolamine phosphate). Phosphocholine is a precursor for phosphatidylcholine, a major component in membranes and a precursor itself in the production of glycoconjugates secreted by parasitic nematodes to avoid host immune responses. This is Phosphoethanolamine N-methyltransferase 1 from Caenorhabditis elegans.